Here is a 688-residue protein sequence, read N- to C-terminus: Thyroid hormone-induced protein B (688 aa).

A signal peptide spans 1–20 (MMLSHWVLLLSLGAVWLAEG). 4 MAM domains span residues 26–169 (GSCT…GYCI), 170–330 (ECDF…SCSG), 341–500 (AGCD…SCKI), and 509–669 (GKCT…PCND). N-linked (GlcNAc...) asparagine glycosylation is found at Asn32 and Asn135. Asn358 and Asn668 each carry an N-linked (GlcNAc...) asparagine glycan.

The protein resides in the membrane. Its subcellular location is the secreted. The protein localises to the extracellular space. The polypeptide is Thyroid hormone-induced protein B (Xenopus laevis (African clawed frog)).